We begin with the raw amino-acid sequence, 242 residues long: Uridylate kinase (242 aa).

ATP is bound at residue 11-14 (KLSG). Positions 19–24 (GNMGYG) are involved in allosteric activation by GTP. Gly-53 provides a ligand contact to UMP. ATP contacts are provided by Gly-54 and Arg-58. Residues Asp-73 and 134–141 (SGNPFFTT) each bind UMP. Positions 161, 167, and 170 each coordinate ATP.

Belongs to the UMP kinase family. As to quaternary structure, homohexamer.

It localises to the cytoplasm. The enzyme catalyses UMP + ATP = UDP + ADP. It participates in pyrimidine metabolism; CTP biosynthesis via de novo pathway; UDP from UMP (UMPK route): step 1/1. Allosterically activated by GTP. Inhibited by UTP. In terms of biological role, catalyzes the reversible phosphorylation of UMP to UDP. This Trichormus variabilis (strain ATCC 29413 / PCC 7937) (Anabaena variabilis) protein is Uridylate kinase.